The following is a 159-amino-acid chain: Ribosomal RNA large subunit methyltransferase H (159 aa).

S-adenosyl-L-methionine contacts are provided by residues L76, G108, and F127 to F132.

The protein belongs to the RNA methyltransferase RlmH family. As to quaternary structure, homodimer.

It localises to the cytoplasm. It catalyses the reaction pseudouridine(1915) in 23S rRNA + S-adenosyl-L-methionine = N(3)-methylpseudouridine(1915) in 23S rRNA + S-adenosyl-L-homocysteine + H(+). In terms of biological role, specifically methylates the pseudouridine at position 1915 (m3Psi1915) in 23S rRNA. The chain is Ribosomal RNA large subunit methyltransferase H from Staphylococcus haemolyticus (strain JCSC1435).